Consider the following 77-residue polypeptide: Large ribosomal subunit protein uL24 (77 aa).

The disordered stretch occupies residues K42–G61.

Belongs to the universal ribosomal protein uL24 family. Part of the 50S ribosomal subunit.

One of two assembly initiator proteins, it binds directly to the 5'-end of the 23S rRNA, where it nucleates assembly of the 50S subunit. Its function is as follows. One of the proteins that surrounds the polypeptide exit tunnel on the outside of the subunit. The polypeptide is Large ribosomal subunit protein uL24 (Lactobacillus helveticus (strain DPC 4571)).